We begin with the raw amino-acid sequence, 231 residues long: Glutathione-S-transferase (231 aa).

The GST N-terminal domain maps to 15–98; it reads LFAVKGTATS…YIADAYDKDG (84 aa).

Belongs to the GST superfamily.

The catalysed reaction is RX + glutathione = an S-substituted glutathione + a halide anion + H(+). Conjugation of reduced glutathione to a wide number of exogenous and endogenous hydrophobic electrophiles. The sequence is that of Glutathione-S-transferase from Alternaria alternata (Alternaria rot fungus).